The chain runs to 91 residues: Cytoplasmic envelopment protein 3 (91 aa).

G2 carries N-myristoyl glycine; by host lipidation. Positions 48-81 (NMGTDEYDEEDEGGDGGEGREPQPEVKTTPYPKR) are disordered. Positions 52 to 62 (DEYDEEDEGGD) are enriched in acidic residues.

Belongs to the herpesviridae cytoplasmic envelopment protein 3 family. As to quaternary structure, interacts with cytoplasmic envelopment protein 2; this interaction is essential for the proper localization of each protein to the assembly complex and thus for the production of infectious virus. In terms of processing, myristoylation and palmitoylation (probably on one or more of the nearby cysteines at the N-terminus) enable membrane-binding and Golgi apparatus-specific targeting and are essential for efficient packaging. Post-translationally, phosphorylated. Phosphorylation does not seem to be required for recycling to the host Golgi apparatus. Packaging is selective for underphosphorylated forms.

It localises to the virion tegument. It is found in the virion membrane. Its subcellular location is the host cell membrane. The protein localises to the host Golgi apparatus membrane. Plays an important role in the cytoplasmic envelopment of tegument proteins and capsids during the assembly and egress processes. Also participates in viral entry at the fusion step probably by regulating the core fusion machinery. In Equus caballus (Horse), this protein is Cytoplasmic envelopment protein 3 (38).